Consider the following 331-residue polypeptide: Germ cell-specific gene 1-like protein (331 aa).

Residues 1–8 (MKTSRRGR) are Cytoplasmic-facing. A helical membrane pass occupies residues 9-29 (ALLAVALNLLALLFATTAFLT). The Extracellular segment spans residues 30–132 (THWCQGTQRV…FIDLAPASEK (103 aa)). Residues 133–153 (GVLWLSVVSEVLYILLLVVGF) form a helical membrane-spanning segment. Residues 154–173 (SLMCLELFHSSNVIDGLKLN) lie on the Cytoplasmic side of the membrane. A helical membrane pass occupies residues 174–194 (AFAAVFTVLSGLLGMVAHMMY). Residues 195–217 (TQVFQVTVSLGPEDWRPHSWDYG) are Extracellular-facing. Residues 218–238 (WSFCLAWGSFTCCMAASVTTL) form a helical membrane-spanning segment. Over 239-331 (NSYTKTVIEF…RQCWVLGHWV (93 aa)) the chain is Cytoplasmic.

This sequence belongs to the GSG1 family. Component of the inner core of AMPAR complex. AMPAR complex consists of an inner core made of 4 pore-forming GluA/GRIA proteins (GRIA1, GRIA2, GRIA3 and GRIA4) and 4 major auxiliary subunits arranged in a twofold symmetry. One of the two pairs of distinct binding sites is occupied either by CNIH2, CNIH3 or CACNG2, CACNG3. The other harbors CACNG2, CACNG3, CACNG4, CACNG8 or GSG1L. This inner core of AMPAR complex is complemented by outer core constituents binding directly to the GluA/GRIA proteins at sites distinct from the interaction sites of the inner core constituents. Outer core constituents include at least PRRT1, PRRT2, CKAMP44/SHISA9, FRRS1L and NRN1. The proteins of the inner and outer core serve as a platform for other, more peripherally associated AMPAR constituents. Alone or in combination, these auxiliary subunits control the gating and pharmacology of the AMPAR complex and profoundly impact their biogenesis and protein processing.

The protein resides in the cell membrane. It localises to the synapse. In terms of biological role, as a component of the inner core of AMPAR complex, modifies AMPA receptor (AMPAR) gating. This is Germ cell-specific gene 1-like protein (GSG1L) from Homo sapiens (Human).